An 884-amino-acid chain; its full sequence is Lon protease homolog 2, peroxisomal (884 aa).

In terms of domain architecture, Lon N-terminal spans 12-255; the sequence is LAILPFRNKV…KATELVDRHL (244 aa). Positions 67-101 are disordered; the sequence is SLLSPGVGSDSGEGGSKAPGGSAGESTKQDTKNGK. The span at 75-89 shows a compositional bias: gly residues; that stretch reads SDSGEGGSKAPGGSA. 408-415 provides a ligand contact to ATP; that stretch reads GPPGVGKT. Residues 689 to 874 form the Lon proteolytic domain; sequence VASPGVSVGL…EEVLDHAFEG (186 aa). Catalysis depends on residues serine 780 and lysine 823. A Microbody targeting signal motif is present at residues 882–884; that stretch reads SKL.

It belongs to the peptidase S16 family.

Its subcellular location is the peroxisome matrix. The enzyme catalyses Hydrolysis of proteins in presence of ATP.. Functionally, ATP-dependent serine protease that mediates the selective degradation of misfolded and unassembled polypeptides in the peroxisomal matrix. Necessary for type 2 peroxisome targeting signal (PTS2)-containing protein processing and facilitates peroxisome matrix protein import. This is Lon protease homolog 2, peroxisomal from Oryza sativa subsp. japonica (Rice).